A 402-amino-acid polypeptide reads, in one-letter code: MIVVGKVDKTPVAKRLVEIVERKGQGHPDYIADGVAEWVSKYLSKYYLERFGVILHHNVDKTLVVGGQASPRFGGGEILQPIYILVSGRATYEVRTKEGVVKIPLGPIVMQAARDWIKNHFRYLDPDVHVVIDYRIGQGSADLVGIYDLGVRGIPLANDTSVGVGYAPLTPLEELVYKTERLLNSRDFKAKYPEVGEDVKVMGVRVGKEVKLTIATAMISRLVKDKSHYLSVKDDVKKAVEDLASKIAPEYSVEVTINAADKPEHGIFYLTVTGTSAEHGDDGMTGRGNRANGLITPMRSMSLEAAAGKNPVSHVGKIYNVVAQKIADRIYKEVKDVIEVYVEIVSQIGKPINEPKILNIEIIKDGELTGEVKNEVEAIAKEELGRITQVTDLILRGEVSLY.

Residue 137–142 coordinates ATP; the sequence is GQGSAD.

The protein belongs to the AdoMet synthase 2 family. The cofactor is Mg(2+).

It carries out the reaction L-methionine + ATP + H2O = S-adenosyl-L-methionine + phosphate + diphosphate. It participates in amino-acid biosynthesis; S-adenosyl-L-methionine biosynthesis; S-adenosyl-L-methionine from L-methionine: step 1/1. Catalyzes the formation of S-adenosylmethionine from methionine and ATP. In Pyrobaculum aerophilum (strain ATCC 51768 / DSM 7523 / JCM 9630 / CIP 104966 / NBRC 100827 / IM2), this protein is S-adenosylmethionine synthase.